We begin with the raw amino-acid sequence, 37 residues long: Large ribosomal subunit protein bL36 (37 aa).

This sequence belongs to the bacterial ribosomal protein bL36 family.

The protein is Large ribosomal subunit protein bL36 of Clostridium perfringens (strain ATCC 13124 / DSM 756 / JCM 1290 / NCIMB 6125 / NCTC 8237 / Type A).